Reading from the N-terminus, the 138-residue chain is Putative pre-16S rRNA nuclease (138 aa).

It belongs to the YqgF nuclease family.

The protein resides in the cytoplasm. Could be a nuclease involved in processing of the 5'-end of pre-16S rRNA. The chain is Putative pre-16S rRNA nuclease from Salmonella arizonae (strain ATCC BAA-731 / CDC346-86 / RSK2980).